The chain runs to 370 residues: DNA primase small subunit PriS (370 aa).

Catalysis depends on residues D92, D94, and D272.

The protein belongs to the eukaryotic-type primase small subunit family. As to quaternary structure, heterodimer of a small subunit (PriS) and a large subunit (PriL). Requires Mg(2+) as cofactor. Mn(2+) is required as a cofactor.

Catalytic subunit of DNA primase, an RNA polymerase that catalyzes the synthesis of short RNA molecules used as primers for DNA polymerase during DNA replication. The small subunit contains the primase catalytic core and has DNA synthesis activity on its own. Binding to the large subunit stabilizes and modulates the activity, increasing the rate of DNA synthesis while decreasing the length of the DNA fragments, and conferring RNA synthesis capability. The DNA polymerase activity may enable DNA primase to also catalyze primer extension after primer synthesis. May also play a role in DNA repair. This Picrophilus torridus (strain ATCC 700027 / DSM 9790 / JCM 10055 / NBRC 100828 / KAW 2/3) protein is DNA primase small subunit PriS.